Here is a 598-residue protein sequence, read N- to C-terminus: Elongation factor 4 (598 aa).

Residues 2 to 184 (KNIRNFSIIA…EIVRCIPPPV (183 aa)) form the tr-type G domain. Residues 14-19 (DHGKST) and 131-134 (NKID) each bind GTP.

This sequence belongs to the TRAFAC class translation factor GTPase superfamily. Classic translation factor GTPase family. LepA subfamily.

The protein localises to the cell inner membrane. The catalysed reaction is GTP + H2O = GDP + phosphate + H(+). Functionally, required for accurate and efficient protein synthesis under certain stress conditions. May act as a fidelity factor of the translation reaction, by catalyzing a one-codon backward translocation of tRNAs on improperly translocated ribosomes. Back-translocation proceeds from a post-translocation (POST) complex to a pre-translocation (PRE) complex, thus giving elongation factor G a second chance to translocate the tRNAs correctly. Binds to ribosomes in a GTP-dependent manner. The chain is Elongation factor 4 from Psychromonas ingrahamii (strain DSM 17664 / CCUG 51855 / 37).